Reading from the N-terminus, the 469-residue chain is Glutamine synthetase (469 aa).

One can recognise a GS beta-grasp domain in the interval 12-97 (HDVKWVDLRF…LVCDIIEPST (86 aa)). The GS catalytic domain occupies 105-469 (PRNIAKRAEE…PLEYDLYYSV (365 aa)). Mg(2+)-binding residues include E130 and E132. E208 contacts ATP. E213 and E221 together coordinate Mg(2+). L-glutamate-binding positions include 265 to 266 (NG) and G266. H270 serves as a coordination point for Mg(2+). Residues 272–274 (HMS) and S274 each bind ATP. L-glutamate-binding residues include R322, E328, and R340. 3 residues coordinate ATP: R340, R345, and K353. Residue E358 coordinates Mg(2+). R360 contacts L-glutamate. Y398 carries the post-translational modification O-AMP-tyrosine.

It belongs to the glutamine synthetase family. As to quaternary structure, oligomer of 12 subunits arranged in the form of two hexameric ring. The cofactor is Mg(2+).

The protein resides in the cytoplasm. The enzyme catalyses L-glutamate + NH4(+) + ATP = L-glutamine + ADP + phosphate + H(+). Its activity is regulated as follows. The activity of this enzyme could be controlled by adenylation under conditions of abundant glutamine. In terms of biological role, catalyzes the ATP-dependent biosynthesis of glutamine from glutamate and ammonia. This Pseudomonas aeruginosa (strain ATCC 15692 / DSM 22644 / CIP 104116 / JCM 14847 / LMG 12228 / 1C / PRS 101 / PAO1) protein is Glutamine synthetase.